We begin with the raw amino-acid sequence, 619 residues long: ATP-dependent DNA helicase RecQ (619 aa).

The Helicase ATP-binding domain maps to 37 to 205; sequence INAALNGQDA…LRHLNLKNLH (169 aa). 50–57 is an ATP binding site; sequence MATGNGKS. The short motif at 149–152 is the DEAH box element; the sequence is DEAH. The Helicase C-terminal domain maps to 229–374; sequence QLTRFVLAQK…QIEQHKLEAI (146 aa). The Zn(2+) site is built by Cys383, Cys400, Cys403, and Cys406. The region spanning 535 to 615 is the HRDC domain; it reads ANYDKDLFAR…QEHKAILANA (81 aa).

This sequence belongs to the helicase family. RecQ subfamily. Mg(2+) is required as a cofactor. Zn(2+) serves as cofactor.

It catalyses the reaction Couples ATP hydrolysis with the unwinding of duplex DNA by translocating in the 3'-5' direction.. The catalysed reaction is ATP + H2O = ADP + phosphate + H(+). An ATP-dependent DNA helicase which unwinds DNA in a 3'-5' direction. Plays a role in recombination. The protein is ATP-dependent DNA helicase RecQ of Haemophilus influenzae (strain ATCC 51907 / DSM 11121 / KW20 / Rd).